Consider the following 225-residue polypeptide: Late embryogenesis abundant protein 29 (225 aa).

Disordered stretches follow at residues M1 to L167 and T193 to K225. Basic and acidic residues-rich tracts occupy residues M28–T39, K49–T61, K71–T83, and K93–A119. LEA 11-mer repeat repeat units lie at residues T53–Q63, T75–Q85, and T97–Q107. Over residues T141 to K153 the composition is skewed to polar residues. Over residues E154 to T163 the composition is skewed to basic and acidic residues. Over residues T205–K225 the composition is skewed to low complexity.

This sequence belongs to the LEA type 4 family.

It is found in the cytoplasm. Its subcellular location is the cytosol. Its function is as follows. Involved dehydration tolerance. This chain is Late embryogenesis abundant protein 29, found in Arabidopsis thaliana (Mouse-ear cress).